Reading from the N-terminus, the 157-residue chain is Endoribonuclease YbeY (157 aa).

Histidine 118, histidine 122, and histidine 128 together coordinate Zn(2+).

It belongs to the endoribonuclease YbeY family. Requires Zn(2+) as cofactor.

It is found in the cytoplasm. Functionally, single strand-specific metallo-endoribonuclease involved in late-stage 70S ribosome quality control and in maturation of the 3' terminus of the 16S rRNA. The chain is Endoribonuclease YbeY from Shewanella loihica (strain ATCC BAA-1088 / PV-4).